The sequence spans 303 residues: MAATPEFGSLRSDDDHWDIVSSVGYTALLVAGWRALHAVGPQPLVRDEYAKYFITASRDPYLMNLLANPGTSLNETAFPRLYGVQTRFFDDFFSSAGDTGIRQAVIVAAGLDSRAYRLKWPNGATVFEIDLPKVLEFKARVLAEQGAIPNAGRSEVAADLRADWPRALKAAGFDPQRSSAWSVEGLLPYLTNDAQSALFTRIGELCAPGSRIAVGALGSRLDRKQLAALEATHPGVNISGDVDFSALTYEPKTDSAQWLAAHGWAVEPVRNTLELQTSYGMTPPDVDVQMDSFMHSQYITATR.

S-adenosyl-L-methionine contacts are provided by residues Asp130 and 159–160 (DL).

It belongs to the UPF0677 family.

Functionally, exhibits S-adenosyl-L-methionine-dependent methyltransferase activity. This is Putative S-adenosyl-L-methionine-dependent methyltransferase ML2020 from Mycobacterium leprae (strain TN).